The following is a 337-amino-acid chain: MSEQKETVHIGTRRSALALRQVDLVIAALQPHHPNVHFQVHALATLGDKNQTASLPSLGKGLWTNELEAKLFNKEVDFIVHCLKDMPTTLPEGGKIGVVTEREDPRDVVVMKKKWAEQGKYKSLADLPEGAIVGTSSVRRAAQLRRRYPGLVFKDVRGNIETRMRKCDEEDYDCIILAAAGLLRMGYDERIAQWLDSTTEGGGMLHAVGQGALAMEIREGDEKTLEIIKPLCHEKTMVATFAERAVMRTLEGGCSVPIGVETKWVGEDQLQLKVTVVSLDGKESVDGQSVEVIKTIEEAEAMGQKLAEDLAKRGAQKILDFVNQGRASGGALKIGDL.

Cysteine 254 bears the S-(dipyrrolylmethanemethyl)cysteine mark.

Belongs to the HMBS family. The cofactor is dipyrromethane.

It catalyses the reaction 4 porphobilinogen + H2O = hydroxymethylbilane + 4 NH4(+). It participates in porphyrin-containing compound metabolism; protoporphyrin-IX biosynthesis; coproporphyrinogen-III from 5-aminolevulinate: step 2/4. Its function is as follows. Tetrapolymerization of the monopyrrole PBG into the hydroxymethylbilane pre-uroporphyrinogen in several discrete steps. The polypeptide is Porphobilinogen deaminase (pda-1) (Neurospora crassa (strain ATCC 24698 / 74-OR23-1A / CBS 708.71 / DSM 1257 / FGSC 987)).